Here is a 428-residue protein sequence, read N- to C-terminus: Somatostatin receptor type 3 (428 aa).

Topologically, residues 1 to 45 are extracellular; that stretch reads MAAVTYPSSVPTTLDPGNASSAWPLDTSLGNASAGTSLAGLAVSG. Residues asparagine 18 and asparagine 31 are each glycosylated (N-linked (GlcNAc...) asparagine). The chain crosses the membrane as a helical span at residues 46–71; sequence ILISLVYLVVCVVGLLGNSLVIYVVL. The Cytoplasmic segment spans residues 72–81; sequence RHTSSPSVTS. Residues 82-103 traverse the membrane as a helical segment; sequence VYILNLALADELFMLGLPFLAA. Residues 104-118 lie on the Extracellular side of the membrane; it reads QNALSYWPFGSLMCR. Cysteines 117 and 192 form a disulfide. A helical membrane pass occupies residues 119 to 140; that stretch reads LVMAVDGINQFTSIFCLTVMSV. Residues 141–162 are Cytoplasmic-facing; it reads DRYLAVVHPTRSARWRTAPVAR. The helical transmembrane segment at 163-182 threads the bilayer; that stretch reads MVSAAVWVASAVVVLPVVVF. Residues 183-206 lie on the Extracellular side of the membrane; sequence SGVPRGMSTCHMQWPEPAAAWRTA. Residues 207-232 form a helical membrane-spanning segment; it reads FIIYTAALGFFGPLLVICLCYLLIVV. Over 233 to 266 the chain is Cytoplasmic; sequence KVRSTTRRVRAPSCQWVQAPACQRRRRSERRVTR. Residues 267–288 traverse the membrane as a helical segment; it reads MVVAVVALFVLCWMPFYLLNIV. The Extracellular segment spans residues 289-302; sequence NVVCPLPEEPAFFG. Residues 303–325 traverse the membrane as a helical segment; the sequence is LYFLVVALPYANSCANPILYGFL. Topologically, residues 326–428 are cytoplasmic; sequence SYRFKQGFRR…GDKASTLSHL (103 aa). Phosphoserine occurs at positions 341, 346, and 351. Residues 343–428 form a disordered region; sequence RVRSQEPGSG…GDKASTLSHL (86 aa). Threonine 357 is modified (phosphothreonine). A compositionally biased stretch (acidic residues) spans 357–370; sequence TEEEEDEEEEERRE. Polar residues predominate over residues 385-412; it reads RLSQIAQPGPSGQQQRPCTGTAKEQQLL.

This sequence belongs to the G-protein coupled receptor 1 family. As to quaternary structure, homodimer and heterodimer with SSTR2. Heterodimerization with SSTR2 inactivates SSTR3 receptor function. In terms of processing, phosphorylated. Phosphorylation increases upon somatostatin binding. As to expression, densely expressed in cerebellum and at moderate levels in the amygdala, cortex, striatum, spleen, liver and pituitary.

It is found in the cell membrane. In terms of biological role, receptor for somatostatin-14 and -28. This receptor is coupled via pertussis toxin sensitive G proteins to inhibition of adenylyl cyclase. In Rattus norvegicus (Rat), this protein is Somatostatin receptor type 3 (Sstr3).